We begin with the raw amino-acid sequence, 309 residues long: Elongation factor Ts, mitochondrial (309 aa).

Belongs to the EF-Ts family.

It localises to the mitochondrion. Functionally, associates with the EF-Tu.GDP complex and induces the exchange of GDP to GTP. It remains bound to the aminoacyl-tRNA.EF-Tu.GTP complex up to the GTP hydrolysis stage on the ribosome. In Salmo salar (Atlantic salmon), this protein is Elongation factor Ts, mitochondrial (tsfm).